Consider the following 782-residue polypeptide: MTATSPFSPQEIAAEGIKPEEYAEIVRRLGRHPNKAELGMFGVMWSEHCCYKNSRPLLKQFPTTGPRILVGPGENAGVVDLGEGLQLAFKIESHNHPSAVEPFQGAATGVGGILRDIFTMGARPIALLNSLRFGSLEDPKTQRLFSGVVAGISHYGNCVGVPTVGGEVYFDPAYSGNPLVNVMALGLMETPEIVKSGAAGIGNPVLYVGSTTGRDGMGGASFASAELSDESIDDRPAVQVGDPFLEKSLIEACLEAFKTGAVVAAQDMGAAGITCSTSEMAAKGGVGIELDLDKIPVRETRMVPYEYLLSESQERMLFVAHQGREQELIDIFHRWGLQAVVAGTVIAEPIVRIFFQGAIAAEIPADALAENTPLYERELLAEPPEYARLAWEWSSEALPTGTTAGIEIQGNLHSWQDILLTLLNTPTIASKNWVYRQYDHQVQNNTVFLPGGADAAVVRLRPLEGQGSRGAGEQGGVNSLSGVAATVDCNPRYVYLDPYEGAKAVVAEAARNLSCVGAEPLAVTDNLNFGSPEKPIGYWQLSEACRGLAEGCRELATPVTGGNVSLYNETFDTQGNPQPIYPTPVVGMVGLIADLTKICGQGWQGVGDVIYLLGASITTLGASEYLATIHNTVAGRPPRVDFDLERRVQKVCREGIHAGSVRSAHDCAEGGLAVALAESCLAGNLGAEIHLEVSPTQLQRLDEVLFGEGGARILVSVVSTQQATWESYLQEHLGQNWQKLGIVGNTDTDLAVLTTDNQTLIRVSIEEMNDRYQNAIARRLAL.

Histidine 48 is an active-site residue. The ATP site is built by tyrosine 51 and lysine 90. A Mg(2+)-binding site is contributed by glutamate 92. Substrate contacts are provided by residues 93–96 and arginine 115; that span reads SHNH. Histidine 94 serves as the catalytic Proton acceptor. Aspartate 116 contacts Mg(2+). Substrate is bound at residue glutamine 239. Position 267 (aspartate 267) interacts with Mg(2+). Substrate is bound at residue 311-313; the sequence is ESQ. Positions 525 and 562 each coordinate ATP. Asparagine 563 is a binding site for Mg(2+). Serine 565 contributes to the substrate binding site.

It belongs to the FGAMS family. As to quaternary structure, monomer. Part of the FGAM synthase complex composed of 1 PurL, 1 PurQ and 2 PurS subunits.

It is found in the cytoplasm. It catalyses the reaction N(2)-formyl-N(1)-(5-phospho-beta-D-ribosyl)glycinamide + L-glutamine + ATP + H2O = 2-formamido-N(1)-(5-O-phospho-beta-D-ribosyl)acetamidine + L-glutamate + ADP + phosphate + H(+). Its pathway is purine metabolism; IMP biosynthesis via de novo pathway; 5-amino-1-(5-phospho-D-ribosyl)imidazole from N(2)-formyl-N(1)-(5-phospho-D-ribosyl)glycinamide: step 1/2. In terms of biological role, part of the phosphoribosylformylglycinamidine synthase complex involved in the purines biosynthetic pathway. Catalyzes the ATP-dependent conversion of formylglycinamide ribonucleotide (FGAR) and glutamine to yield formylglycinamidine ribonucleotide (FGAM) and glutamate. The FGAM synthase complex is composed of three subunits. PurQ produces an ammonia molecule by converting glutamine to glutamate. PurL transfers the ammonia molecule to FGAR to form FGAM in an ATP-dependent manner. PurS interacts with PurQ and PurL and is thought to assist in the transfer of the ammonia molecule from PurQ to PurL. The protein is Phosphoribosylformylglycinamidine synthase subunit PurL of Nostoc sp. (strain PCC 7120 / SAG 25.82 / UTEX 2576).